A 462-amino-acid polypeptide reads, in one-letter code: MQEGKISQIIGPVVDVDFPEGQLPSILDALTITRPDGSRLVLETQQHLGEERVRTVAMESTDGLIRGLSVANTGRPIQAPVGEGVLGRMLNVVGDPIDGRGPVNATKTYSIHRSAPKFEDLSTKAEMFETGIKVIDLLEPYSRGGKTGLFGGAGVGKTVLIMELINNIAKQQSGYSVFAGVGERTREGNDLWHEMMESGVIDKTALVFGQMNEPPGARARVALTGLSIAEYFRDEEHRDVLLFIDNIFRFTQAGSEVSALLGRMPSAVGYQPTLATEMGELQDRITSTKNGSVTSVQAIYVPADDLTDPAPATAFAHLDATTVLSRQIAELGIYPAVDPLDSTSRILDPNVIGDDHYDTAQSVKQILQRYKDLQDIIAILGMDELSDEDKLVVARARKVQRFLSQPFFVAEAFTGLAGKYVKLEDSIKGFKEIIAGKHDNLPEGAFYLVGTIEEAIEKAKTL.

Residue 151–158 coordinates ATP; the sequence is GGAGVGKT.

It belongs to the ATPase alpha/beta chains family. F-type ATPases have 2 components, CF(1) - the catalytic core - and CF(0) - the membrane proton channel. CF(1) has five subunits: alpha(3), beta(3), gamma(1), delta(1), epsilon(1). CF(0) has four main subunits: a(1), b(1), b'(1) and c(9-12).

Its subcellular location is the cell inner membrane. It carries out the reaction ATP + H2O + 4 H(+)(in) = ADP + phosphate + 5 H(+)(out). In terms of biological role, produces ATP from ADP in the presence of a proton gradient across the membrane. The catalytic sites are hosted primarily by the beta subunits. The protein is ATP synthase subunit beta 1 of Chlorobium luteolum (strain DSM 273 / BCRC 81028 / 2530) (Pelodictyon luteolum).